Reading from the N-terminus, the 257-residue chain is Probable enoyl-CoA hydratase (257 aa).

The protein belongs to the enoyl-CoA hydratase/isomerase family.

It catalyses the reaction a (3S)-3-hydroxyacyl-CoA = a (2E)-enoyl-CoA + H2O. It carries out the reaction a 4-saturated-(3S)-3-hydroxyacyl-CoA = a (3E)-enoyl-CoA + H2O. Could possibly oxidize fatty acids using specific components. This is Probable enoyl-CoA hydratase (fadB1) from Rhodobacter capsulatus (strain ATCC BAA-309 / NBRC 16581 / SB1003).